The sequence spans 620 residues: Chaperone protein DnaK (620 aa).

A Phosphothreonine; by autocatalysis modification is found at threonine 197. Residues 597 to 620 (AMANKNNAEQPKKKDDDVIDAEVE) form a disordered region.

The protein belongs to the heat shock protein 70 family.

Its function is as follows. Acts as a chaperone. In Helicobacter acinonychis (strain Sheeba), this protein is Chaperone protein DnaK.